The following is a 227-amino-acid chain: Translation initiation factor 6 (227 aa).

The protein belongs to the eIF-6 family.

In terms of biological role, binds to the 50S ribosomal subunit and prevents its association with the 30S ribosomal subunit to form the 70S initiation complex. The chain is Translation initiation factor 6 from Staphylothermus marinus (strain ATCC 43588 / DSM 3639 / JCM 9404 / F1).